A 92-amino-acid polypeptide reads, in one-letter code: Putative pterin-4-alpha-carbinolamine dehydratase (92 aa).

Belongs to the pterin-4-alpha-carbinolamine dehydratase family.

The enzyme catalyses (4aS,6R)-4a-hydroxy-L-erythro-5,6,7,8-tetrahydrobiopterin = (6R)-L-erythro-6,7-dihydrobiopterin + H2O. This is Putative pterin-4-alpha-carbinolamine dehydratase from Acidobacterium capsulatum (strain ATCC 51196 / DSM 11244 / BCRC 80197 / JCM 7670 / NBRC 15755 / NCIMB 13165 / 161).